Consider the following 105-residue polypeptide: Large ribosomal subunit protein bL21 (105 aa).

The protein belongs to the bacterial ribosomal protein bL21 family. In terms of assembly, part of the 50S ribosomal subunit. Contacts protein L20.

In terms of biological role, this protein binds to 23S rRNA in the presence of protein L20. The sequence is that of Large ribosomal subunit protein bL21 from Porphyromonas gingivalis (strain ATCC BAA-308 / W83).